An 89-amino-acid polypeptide reads, in one-letter code: Small ribosomal subunit protein uS15 (89 aa).

Over residues 1-21 (MAISQERKNEIIKEYARHEGD) the composition is skewed to basic and acidic residues. A disordered region spans residues 1–24 (MAISQERKNEIIKEYARHEGDTGS).

This sequence belongs to the universal ribosomal protein uS15 family. As to quaternary structure, part of the 30S ribosomal subunit. Forms a bridge to the 50S subunit in the 70S ribosome, contacting the 23S rRNA.

Its function is as follows. One of the primary rRNA binding proteins, it binds directly to 16S rRNA where it helps nucleate assembly of the platform of the 30S subunit by binding and bridging several RNA helices of the 16S rRNA. Functionally, forms an intersubunit bridge (bridge B4) with the 23S rRNA of the 50S subunit in the ribosome. The chain is Small ribosomal subunit protein uS15 from Enterococcus faecalis (strain ATCC 700802 / V583).